The primary structure comprises 546 residues: Metal transporter Nramp6.2 (546 aa).

A run of 8 helical transmembrane segments spans residues 50–70 (FLPY…PGNL), 83–103 (ELLW…SLAA), 128–150 (SLWL…GTAF), 154–176 (ILFH…LLLG), 187–207 (LLIS…LSYV), 233–253 (IALL…ALVL), 270–290 (YFLI…VSII), and 333–353 (IYAI…TYAG). A glycan (N-linked (GlcNAc...) asparagine) is linked at Asn371. A run of 4 helical transmembrane segments spans residues 374-394 (TRCI…SSGA), 397-417 (LIII…IPLL), 433-453 (IYII…NVYY), and 473-493 (VIIG…IIYL).

Belongs to the NRAMP (TC 2.A.55) family.

Its subcellular location is the membrane. Its function is as follows. Probable divalent metal transporter. In Populus trichocarpa (Western balsam poplar), this protein is Metal transporter Nramp6.2.